We begin with the raw amino-acid sequence, 85 residues long: Large ribosomal subunit protein bL27 (85 aa).

Belongs to the bacterial ribosomal protein bL27 family.

This is Large ribosomal subunit protein bL27 from Vesicomyosocius okutanii subsp. Calyptogena okutanii (strain HA).